Reading from the N-terminus, the 705-residue chain is Tyrosine decarboxylase (705 aa).

The segment covering 22-32 has biased composition (polar residues); that stretch reads RIRNSLSPSRP. Residues 22–81 are disordered; sequence RIRNSLSPSRPSMSEATATGSSSSSRASTTIPSTPNMDVTPTVEDPRQNDNNASGMTRDE. Positions 33-55 are enriched in low complexity; that stretch reads SMSEATATGSSSSSRASTTIPST. Lys-380 carries the post-translational modification N6-(pyridoxal phosphate)lysine. Residues 554–620 adopt a coiled-coil conformation; sequence VKAVIAEEDE…AQKQHESLAK (67 aa). Over residues 667-678 the composition is skewed to polar residues; that stretch reads HSQRPNRLSQSP. A disordered region spans residues 667 to 687; that stretch reads HSQRPNRLSQSPGSAGSAFFD.

The protein belongs to the group II decarboxylase family. Requires pyridoxal 5'-phosphate as cofactor. As to expression, expressed in the gonadal sheath projections in between the oocytes, in head RIM motor neurons and RIC interneurons.

It localises to the cytoplasm. The protein resides in the cell projection. It is found in the axon. The protein localises to the perikaryon. It catalyses the reaction L-tyrosine + H(+) = tyramine + CO2. Functionally, required for the decarboxylation of tyrosine to tyramine, a precursor of octopamine but probably also itself a neurotransmitter. Involved in the regulation of egg laying, which is inhibited by tyramine. Also involved in controlling locomotion and head movements. Due to its involvement in octopamine biosynthesis, also required for crtc-1-dependent regulation of AMPK-mediated longevity which requires octopamine signaling. The sequence is that of Tyrosine decarboxylase from Caenorhabditis elegans.